A 298-amino-acid chain; its full sequence is N-acetylmuramic acid 6-phosphate etherase (298 aa).

The region spanning 57 to 220 (IAAAFGKGGR…STGAMIRTGK (164 aa)) is the SIS domain. Glu-85 (proton donor) is an active-site residue. Residue Glu-116 is part of the active site.

Belongs to the GCKR-like family. MurNAc-6-P etherase subfamily. Homodimer.

The catalysed reaction is N-acetyl-D-muramate 6-phosphate + H2O = N-acetyl-D-glucosamine 6-phosphate + (R)-lactate. It participates in amino-sugar metabolism; 1,6-anhydro-N-acetylmuramate degradation. It functions in the pathway amino-sugar metabolism; N-acetylmuramate degradation. Its pathway is cell wall biogenesis; peptidoglycan recycling. Functionally, specifically catalyzes the cleavage of the D-lactyl ether substituent of MurNAc 6-phosphate, producing GlcNAc 6-phosphate and D-lactate. Together with AnmK, is also required for the utilization of anhydro-N-acetylmuramic acid (anhMurNAc) either imported from the medium or derived from its own cell wall murein, and thus plays a role in cell wall recycling. The chain is N-acetylmuramic acid 6-phosphate etherase from Aeromonas hydrophila subsp. hydrophila (strain ATCC 7966 / DSM 30187 / BCRC 13018 / CCUG 14551 / JCM 1027 / KCTC 2358 / NCIMB 9240 / NCTC 8049).